The sequence spans 108 residues: Putative transmembrane protein ORF108 (108 aa).

3 consecutive transmembrane segments (helical) span residues 11–31, 33–53, and 69–89; these read FIMGLFPLLAVILISSNSSII, IAMTVIIFGWIIYETLITVHF, and VGFLGVLCLDKFPFGIILLII.

The protein resides in the host membrane. The polypeptide is Putative transmembrane protein ORF108 (Acidianus hospitalis (AFV-1)).